Consider the following 397-residue polypeptide: Elongation factor Tu (397 aa).

Positions 10 to 207 (KPHVNIGTIG…ACDSYIPEPE (198 aa)) constitute a tr-type G domain. The G1 stretch occupies residues 19 to 26 (GHIDHGKT). 19 to 26 (GHIDHGKT) lines the GTP pocket. A Mg(2+)-binding site is contributed by T26. Residues 60–64 (GITIA) are G2. Positions 81-84 (DCPG) are G3. Residues 81–85 (DCPGH) and 136–139 (NKCD) contribute to the GTP site. The G4 stretch occupies residues 136–139 (NKCD). The interval 174-176 (SAL) is G5.

The protein belongs to the TRAFAC class translation factor GTPase superfamily. Classic translation factor GTPase family. EF-Tu/EF-1A subfamily. As to quaternary structure, monomer.

It localises to the cytoplasm. The catalysed reaction is GTP + H2O = GDP + phosphate + H(+). Its function is as follows. GTP hydrolase that promotes the GTP-dependent binding of aminoacyl-tRNA to the A-site of ribosomes during protein biosynthesis. In Oleidesulfovibrio alaskensis (strain ATCC BAA-1058 / DSM 17464 / G20) (Desulfovibrio alaskensis), this protein is Elongation factor Tu.